A 162-amino-acid polypeptide reads, in one-letter code: Anthrone oxygenase nsrD (162 aa).

The next 3 membrane-spanning stretches (helical) occupy residues 17–37, 54–74, and 86–106; these read FLSGSMMSLSALVIPLFLDTI, GSIYMPALCVATCGIYGYVAL, and PYVLAAVSTLAMVPFTWWVMV. N-linked (GlcNAc...) asparagine glycosylation is present at asparagine 109. Residues 130 to 150 traverse the membrane as a helical segment; sequence LVVKWAWLHVVRSLYPLFGAF.

Belongs to the anthrone oxygenase family.

It is found in the membrane. The enzyme catalyses emodin anthrone + O2 = emodin + H2O + H(+). Its pathway is secondary metabolite biosynthesis. Anthrone oxygenase; part of the gene cluster that mediates the biosynthesis of the tetrahydroxanthone dimer neosartorin, which exhibits antibacterial activity. The two different monomeric units appear to be synthesized by the same set of enzymes, among which the Baeyer-Villiger monooxygenase nsrF is the key enzyme for the divergence of the biosynthetic routes. The pathway begins with the synthesis of atrochrysone thioester by the polyketide synthase nsrB. The atrochrysone carboxyl ACP thioesterase nsrC then breaks the thioester bond and releases the atrochrysone carboxylic acid from AacuL. Atrochrysone carboxylic acid is decarboxylated by the decarboxylase nsrE, and oxidized by the anthrone oxygenase nsrD to yield emodin. Emodin is then reduced to emodin hydroquinone by the oxidoreductase nsrR. A-ring reduction by the short chain dehydrogenase nsrJ, dehydration by the scytalone dehydratase-like protein nsrI and probable spontaneous re-oxidation, results in overall deoxygenation to chrysophanol. The Baeyer-Villiger monooxygenase nsrF accepts chrysophanol as a substrate to insert one oxygen atom at two different positions to yield the precursors of both monomric units. NsrF is promiscuous/flexible in interacting with the 2 (non methylated and methylated) aromatic rings of chrysophanol, thus diverging the biosynthetic pathway at this point. After the hydrolysis of the lactones, methylesterification by the methyltransferase nsrG yields respectively moniliphenone and 2,2',6'-trihydroxy-4-methyl-6-methoxya-cyldiphenylmethanone. The next steps are the hydroxylation by the FAD-dependent monooxygenase nsrK, followed by isomerization by the monooxygenase nsrQ. The short chain dehydrogenase/reductase nsrO then catalyzes the C-5 ketoreduction to give the xanthone skeleton of blennolide C and 5-acetylblennolide A. The acetyltransferase nsrL has a strict substrate specificity and uses only blennolide A but not blennolide C to yield 5-acetylblennolide A as the single-acetylated product. In the final step of the biosynthesis, the heterodimerization of the 2 xanthones, blennolide C and 5-acetylblennolide A, is catalyzed by the cytochrome P450 monooxygenase nsrP. NsrP can utilize at least three different xanthones as its substrates to perform the dimerization reaction. The sequence is that of Anthrone oxygenase nsrD from Aspergillus novofumigatus (strain IBT 16806).